The primary structure comprises 405 residues: Phosphoglycerate kinase (405 aa).

Substrate is bound by residues 24-26 (DFN), arginine 40, 63-66 (HLGR), arginine 122, and arginine 162. ATP is bound by residues lysine 212, glutamate 331, and 361–364 (GGDS).

It belongs to the phosphoglycerate kinase family. Monomer.

Its subcellular location is the cytoplasm. It carries out the reaction (2R)-3-phosphoglycerate + ATP = (2R)-3-phospho-glyceroyl phosphate + ADP. Its pathway is carbohydrate degradation; glycolysis; pyruvate from D-glyceraldehyde 3-phosphate: step 2/5. This is Phosphoglycerate kinase from Corynebacterium aurimucosum (strain ATCC 700975 / DSM 44827 / CIP 107346 / CN-1) (Corynebacterium nigricans).